The sequence spans 411 residues: Lissencephaly-1 homolog (411 aa).

The LisH domain occupies 9 to 41; it reads QREELNQAIADYLGTNGYADSLEAFRKEADLST. Positions 56 to 83 form a coiled coil; that stretch reads TSVIRLQKKVMELEAKLTEAEKEVIEGA. WD repeat units follow at residues 106–147, 148–187, 191–230, 233–272, 275–334, 337–376, and 379–411; these read GHRA…RTLK, GHTD…ECVK, GHDH…CVKT, GHRE…CKVE, DHEH…CLLT, GHDN…CMKT, and AHQH…WECR.

Belongs to the WD repeat LIS1/nudF family.

The protein resides in the cytoplasm. It localises to the cytoskeleton. It is found in the microtubule organizing center. The protein localises to the centrosome. Its function is as follows. Positively regulates the activity of the minus-end directed microtubule motor protein dynein. May enhance dynein-mediated microtubule sliding by targeting dynein to the microtubule plus end. Required for several dynein- and microtubule-dependent processes. This Drosophila grimshawi (Hawaiian fruit fly) protein is Lissencephaly-1 homolog.